A 278-amino-acid polypeptide reads, in one-letter code: Phosphatidylglycerol--prolipoprotein diacylglyceryl transferase (278 aa).

Helical transmembrane passes span 21-41 (WYGIIIAMGILLGYFIAQASV), 54-74 (IIFWSAIFGFIIARIYFVIFQ), and 88-108 (IWQGGIAIHGGLIGGFVTGII). A 1,2-diacyl-sn-glycero-3-phospho-(1'-sn-glycerol) is bound at residue R136. The next 3 helical transmembrane spans lie at 176–196 (QPTFLYESIWDVLGFVILILL), 202–222 (IGDTFCLYLIWYSIGRFFVEG), and 234–254 (IRIAQLMSIILIIIGVVIMIV).

This sequence belongs to the Lgt family.

The protein localises to the cell membrane. It catalyses the reaction L-cysteinyl-[prolipoprotein] + a 1,2-diacyl-sn-glycero-3-phospho-(1'-sn-glycerol) = an S-1,2-diacyl-sn-glyceryl-L-cysteinyl-[prolipoprotein] + sn-glycerol 1-phosphate + H(+). The protein operates within protein modification; lipoprotein biosynthesis (diacylglyceryl transfer). Its function is as follows. Catalyzes the transfer of the diacylglyceryl group from phosphatidylglycerol to the sulfhydryl group of the N-terminal cysteine of a prolipoprotein, the first step in the formation of mature lipoproteins. The chain is Phosphatidylglycerol--prolipoprotein diacylglyceryl transferase from Staphylococcus saprophyticus subsp. saprophyticus (strain ATCC 15305 / DSM 20229 / NCIMB 8711 / NCTC 7292 / S-41).